We begin with the raw amino-acid sequence, 82 residues long: Putative membrane protein insertion efficiency factor (82 aa).

The protein belongs to the UPF0161 family.

The protein localises to the cell membrane. Could be involved in insertion of integral membrane proteins into the membrane. This is Putative membrane protein insertion efficiency factor from Streptococcus uberis (strain ATCC BAA-854 / 0140J).